A 686-amino-acid chain; its full sequence is Putative xyloglucan glycosyltransferase 10 (686 aa).

Helical transmembrane passes span 114-134 (LYAFIRASLLLSVFLLAVELA) and 160-180 (AAYVAPPLQLLADACVVLFLV). Asp-267 is an active-site residue. Residues Asp-326 and Asp-328 each contribute to the substrate site. Residue Asp-420 is part of the active site. Transmembrane regions (helical) follow at residues 498-518 (LILPFYSFTLFCIILPMTMFI), 523-543 (LPDWVVCYIPALMSFLNILPA), 640-656 (ELALSLLLLTAAARSLL), and 661-681 (IHFYFLMFQGLSFLLVGLDLI).

The protein belongs to the glycosyltransferase 2 family. Plant cellulose synthase-like C subfamily.

The protein resides in the golgi apparatus membrane. Functionally, probable beta-1,4-glucan synthase rather involved in the synthesis of the xyloglucan backbone than cellulose. Seems to work simultaneously with xyloglucan 6-xylosyltransferase. Xyloglucan is a noncellulosic polysaccharides of plant cell wall and consists of a glucan backbone substituted by xylose, galactose and fucose. The chain is Putative xyloglucan glycosyltransferase 10 (CSLC10) from Oryza sativa subsp. indica (Rice).